The following is a 124-amino-acid chain: Phosphoribosyl-AMP cyclohydrolase (124 aa).

Residue Asp-82 participates in Mg(2+) binding. Cys-83 contributes to the Zn(2+) binding site. Residues Asp-84 and Asp-86 each contribute to the Mg(2+) site. Positions 99 and 106 each coordinate Zn(2+).

Belongs to the PRA-CH family. As to quaternary structure, homodimer. It depends on Mg(2+) as a cofactor. Zn(2+) serves as cofactor.

It localises to the cytoplasm. It carries out the reaction 1-(5-phospho-beta-D-ribosyl)-5'-AMP + H2O = 1-(5-phospho-beta-D-ribosyl)-5-[(5-phospho-beta-D-ribosylamino)methylideneamino]imidazole-4-carboxamide. Its pathway is amino-acid biosynthesis; L-histidine biosynthesis; L-histidine from 5-phospho-alpha-D-ribose 1-diphosphate: step 3/9. Its function is as follows. Catalyzes the hydrolysis of the adenine ring of phosphoribosyl-AMP. In Rhizorhabdus wittichii (strain DSM 6014 / CCUG 31198 / JCM 15750 / NBRC 105917 / EY 4224 / RW1) (Sphingomonas wittichii), this protein is Phosphoribosyl-AMP cyclohydrolase.